The following is a 535-amino-acid chain: Dynein axonemal assembly factor 8 (535 aa).

Disordered stretches follow at residues 112–215 (AELA…QERR), 228–267 (RDACGPASSDQGGVKEAPCHAVESAARSKMPLAEPPEGPP), 344–380 (PADTPQDTEEAGAGSRCSSRKPGSEAGPGPQLAQGMR), 395–444 (TVPP…LRSC), and 461–535 (IAQP…LDQL). Basic and acidic residues predominate over residues 125–139 (RTKDASSQEGRDPGR). Residues 166–175 (GSLSFNTKGS) show a composition bias toward polar residues. At serine 175 the chain carries Phosphoserine. Residue serine 362 is modified to Phosphoserine. Over residues 415–424 (DSEEEEEEVE) the composition is skewed to acidic residues. Over residues 435–444 (SPSSLGLRSC) the composition is skewed to polar residues.

Its subcellular location is the dynein axonemal particle. It is found in the cytoplasm. Its function is as follows. In cyliated cells, dynein axonemal particle-specific protein required for deployment of ODA to the axoneme. Interacts with outer dynein arm (ODA) subunits. The protein is Dynein axonemal assembly factor 8 (DNAAF8) of Macaca fascicularis (Crab-eating macaque).